Consider the following 329-residue polypeptide: Glycerol-3-phosphate dehydrogenase [NAD(P)+] (329 aa).

NADPH-binding residues include Trp-11 and Lys-101. Sn-glycerol 3-phosphate contacts are provided by Lys-101, Gly-132, and Ser-134. An NADPH-binding site is contributed by Ala-136. Sn-glycerol 3-phosphate contacts are provided by Lys-188, Asp-241, Ser-251, Arg-252, and Asn-253. The active-site Proton acceptor is the Lys-188. Arg-252 is a binding site for NADPH. Position 278 (Glu-278) interacts with NADPH.

It belongs to the NAD-dependent glycerol-3-phosphate dehydrogenase family.

Its subcellular location is the cytoplasm. It catalyses the reaction sn-glycerol 3-phosphate + NAD(+) = dihydroxyacetone phosphate + NADH + H(+). It carries out the reaction sn-glycerol 3-phosphate + NADP(+) = dihydroxyacetone phosphate + NADPH + H(+). It participates in membrane lipid metabolism; glycerophospholipid metabolism. Catalyzes the reduction of the glycolytic intermediate dihydroxyacetone phosphate (DHAP) to sn-glycerol 3-phosphate (G3P), the key precursor for phospholipid synthesis. This is Glycerol-3-phosphate dehydrogenase [NAD(P)+] from Onion yellows phytoplasma (strain OY-M).